Consider the following 209-residue polypeptide: Small ribosomal subunit protein uS3 (209 aa).

Positions 17-86 constitute a KH type-2 domain; sequence IDEYLEKELR…NPQIEVEEIK (70 aa).

Belongs to the universal ribosomal protein uS3 family. As to quaternary structure, part of the 30S ribosomal subunit.

Its function is as follows. Binds the lower part of the 30S subunit head. The sequence is that of Small ribosomal subunit protein uS3 from Thermococcus gammatolerans (strain DSM 15229 / JCM 11827 / EJ3).